We begin with the raw amino-acid sequence, 151 residues long: Transcription antitermination protein NusB (151 aa).

It belongs to the NusB family.

Its function is as follows. Involved in transcription antitermination. Required for transcription of ribosomal RNA (rRNA) genes. Binds specifically to the boxA antiterminator sequence of the ribosomal RNA (rrn) operons. This Thermodesulfovibrio yellowstonii (strain ATCC 51303 / DSM 11347 / YP87) protein is Transcription antitermination protein NusB.